Consider the following 1088-residue polypeptide: DNA mismatch repair protein MutS (1088 aa).

The interval 498–579 (PLDGITPPDD…SFEMPSLHGH (82 aa)) is disordered. Residues 537–546 (DLFDEEEEQE) show a composition bias toward acidic residues. 816 to 823 (GPNMSGKS) is an ATP binding site. The segment at 1000–1048 (LERRAPRSTPQPAPERTEERPAAGRPTARSHSAARGDPPRAPDGQLSLF) is disordered.

The protein belongs to the DNA mismatch repair MutS family.

Its function is as follows. This protein is involved in the repair of mismatches in DNA. It is possible that it carries out the mismatch recognition step. This protein has a weak ATPase activity. This chain is DNA mismatch repair protein MutS, found in Roseiflexus castenholzii (strain DSM 13941 / HLO8).